A 124-amino-acid chain; its full sequence is Small ribosomal subunit protein uS12 (124 aa).

The residue at position 89 (Asp-89) is a 3-methylthioaspartic acid.

The protein belongs to the universal ribosomal protein uS12 family. Part of the 30S ribosomal subunit. Contacts proteins S8 and S17. May interact with IF1 in the 30S initiation complex.

Its function is as follows. With S4 and S5 plays an important role in translational accuracy. Interacts with and stabilizes bases of the 16S rRNA that are involved in tRNA selection in the A site and with the mRNA backbone. Located at the interface of the 30S and 50S subunits, it traverses the body of the 30S subunit contacting proteins on the other side and probably holding the rRNA structure together. The combined cluster of proteins S8, S12 and S17 appears to hold together the shoulder and platform of the 30S subunit. In Shewanella oneidensis (strain ATCC 700550 / JCM 31522 / CIP 106686 / LMG 19005 / NCIMB 14063 / MR-1), this protein is Small ribosomal subunit protein uS12.